A 458-amino-acid polypeptide reads, in one-letter code: DNA repair protein RadA (458 aa).

The C4-type zinc-finger motif lies at 10–27 (CQSCGYESPKWMGKCPGC). 98-105 (GDPGIGKS) serves as a coordination point for ATP. The short motif at 255–259 (KNRFG) is the RadA KNRFG motif element. Residues 354–458 (DAYLKVAGGV…AEALRTSLGG (105 aa)) are lon-protease-like.

It belongs to the RecA family. RadA subfamily. As to quaternary structure, interacts with DisA.

Its function is as follows. DNA-dependent ATPase involved in processing of recombination intermediates, plays a role in repairing DNA breaks. Stimulates the branch migration of RecA-mediated strand transfer reactions, allowing the 3' invading strand to extend heteroduplex DNA faster. Binds ssDNA in the presence of ADP but not other nucleotides, has ATPase activity that is stimulated by ssDNA and various branched DNA structures, but inhibited by SSB. Does not have RecA's homology-searching function. Plays a role in DNA repair. Might stabilize or process Holliday junction intermediates. May work with DisA following methyl methanesulfonate (MMS) but not H(2)O(2) damage; DisA is a DNA integrity scanning protein with c-di-AMP synthase activity. The protein is DNA repair protein RadA of Bacillus subtilis (strain 168).